Consider the following 152-residue polypeptide: Small ribosomal subunit protein uS8m (152 aa).

Belongs to the universal ribosomal protein uS8 family.

The protein resides in the mitochondrion. The polypeptide is Small ribosomal subunit protein uS8m (mrps8) (Dictyostelium citrinum (Slime mold)).